Consider the following 493-residue polypeptide: Glycylpeptide N-tetradecanoyltransferase (493 aa).

Positions 1 to 30 (MSDSKDSKGKAPQKPNDAEQTPGGKLTPQA) are disordered. Tetradecanoyl-CoA is bound by residues 82 to 85 (FKFW), 216 to 218 (LCI), and 224 to 228 (SKRLA). Residue Leu-493 is the Proton acceptor; via carboxylate of the active site.

It belongs to the NMT family. Monomer.

It is found in the cytoplasm. It carries out the reaction N-terminal glycyl-[protein] + tetradecanoyl-CoA = N-tetradecanoylglycyl-[protein] + CoA + H(+). Functionally, adds a myristoyl group to the N-terminal glycine residue of certain cellular proteins. This Emericella nidulans (strain FGSC A4 / ATCC 38163 / CBS 112.46 / NRRL 194 / M139) (Aspergillus nidulans) protein is Glycylpeptide N-tetradecanoyltransferase (swoF).